A 197-amino-acid polypeptide reads, in one-letter code: Phosphoheptose isomerase (197 aa).

The SIS domain occupies 37 to 197 (MLQCLMNDGK…CIDSVLLEGM (161 aa)). Substrate is bound at residue 52–54 (NGG). Residues His-61 and Glu-65 each contribute to the Zn(2+) site. Residues Glu-65, 94–95 (ND), 120–122 (STS), Ser-125, and Gln-175 contribute to the substrate site. Zn(2+)-binding residues include Gln-175 and His-183.

This sequence belongs to the SIS family. GmhA subfamily. As to quaternary structure, homotetramer. Requires Zn(2+) as cofactor.

The protein localises to the cytoplasm. It carries out the reaction 2 D-sedoheptulose 7-phosphate = D-glycero-alpha-D-manno-heptose 7-phosphate + D-glycero-beta-D-manno-heptose 7-phosphate. It functions in the pathway carbohydrate biosynthesis; D-glycero-D-manno-heptose 7-phosphate biosynthesis; D-glycero-alpha-D-manno-heptose 7-phosphate and D-glycero-beta-D-manno-heptose 7-phosphate from sedoheptulose 7-phosphate: step 1/1. In terms of biological role, catalyzes the isomerization of sedoheptulose 7-phosphate in D-glycero-D-manno-heptose 7-phosphate. This Neisseria gonorrhoeae (strain ATCC 700825 / FA 1090) protein is Phosphoheptose isomerase.